The following is a 119-amino-acid chain: MORF4 family associated protein 1 like 2 (119 aa).

Basic and acidic residues predominate over residues 1–16 (MRPVDADEAREPREEP). Residues 1-36 (MRPVDADEAREPREEPGSPLSPAPRAGRENLASLER) form a disordered region.

This sequence belongs to the MORF4 family-associated protein family. May interact with CDK2AP1.

May play a role in cell proliferation. The polypeptide is MORF4 family associated protein 1 like 2 (Homo sapiens (Human)).